A 403-amino-acid chain; its full sequence is Para-nitrophenol 4-monooxygenase (403 aa).

FAD-binding positions include 6–35 and 279–289; these read GVVV…VLEA and FRRGRVVLAGD.

It belongs to the PheA/TfdB FAD monooxygenase family. As to quaternary structure, monomer. The cofactor is FAD.

It carries out the reaction 4-nitrophenol + NADPH + O2 + H(+) = 1,4-benzoquinone + nitrite + NADP(+) + H2O. The protein operates within xenobiotic degradation; 4-nitrophenol degradation. Involved in the degradation of para-nitrophenol (4-NP). Catalyzes oxidation of 4-nitrophenol (4-NP) at position 4 with concomitant removal of the nitro group as nitrite and production of para-benzoquinone. This is Para-nitrophenol 4-monooxygenase (pnpA) from Pseudomonas sp. (strain WBC-3).